Here is an 89-residue protein sequence, read N- to C-terminus: uncharacterized protein (89 aa).

Residues 31–89 are disordered; sequence TPQPLEPHEHPKPMEPNEFDPKPDDPPRNPDPSPFPNEVPKPKPSDFPIPDELYPQPIV. Residues 36-58 are compositionally biased toward basic and acidic residues; that stretch reads EPHEHPKPMEPNEFDPKPDDPPR. Residues 59–69 show a composition bias toward pro residues; that stretch reads NPDPSPFPNEV.

This is an uncharacterized protein from Dictyostelium discoideum (Social amoeba).